Reading from the N-terminus, the 73-residue chain is Sec-independent protein translocase protein TatA (73 aa).

Residues Met1 to Thr21 traverse the membrane as a helical segment.

This sequence belongs to the TatA/E family. As to quaternary structure, the Tat system comprises two distinct complexes: a TatABC complex, containing multiple copies of TatA, TatB and TatC subunits, and a separate TatA complex, containing only TatA subunits. Substrates initially bind to the TatABC complex, which probably triggers association of the separate TatA complex to form the active translocon.

It localises to the cell inner membrane. Functionally, part of the twin-arginine translocation (Tat) system that transports large folded proteins containing a characteristic twin-arginine motif in their signal peptide across membranes. TatA could form the protein-conducting channel of the Tat system. This Histophilus somni (strain 129Pt) (Haemophilus somnus) protein is Sec-independent protein translocase protein TatA.